Here is a 242-residue protein sequence, read N- to C-terminus: Vacuole localized DSC protein 1 (242 aa).

The next 2 membrane-spanning stretches (helical) occupy residues 128 to 148 (PYGF…PTAF) and 152 to 172 (LLLV…INGS).

Part of the vacuole-localized DSC E3 ligase complex composed of at least TUL1, DSC2, DSC3, UBX3, CDC48 and VLD1.

It localises to the vacuole membrane. Functionally, component of the vacuole-localized DSC E3 ubiquitin ligase complex involved in the targeting of the complex to the vacuole membrane via the AP3 pathway to ubiquinate vacuolar membrane proteins. Competes with GLD1 to determine the subcellular localizations of the DSC complex. The sequence is that of Vacuole localized DSC protein 1 from Saccharomyces cerevisiae (strain ATCC 204508 / S288c) (Baker's yeast).